Consider the following 408-residue polypeptide: Multifunctional CCA protein (408 aa).

The ATP site is built by G8 and R11. CTP contacts are provided by G8 and R11. The Mg(2+) site is built by D21 and D23. ATP-binding residues include R91, R137, and R140. CTP is bound by residues R91, R137, and R140. The HD domain maps to 228 to 329 (SGVHTLMVLE…VKLFDKADFW (102 aa)).

The protein belongs to the tRNA nucleotidyltransferase/poly(A) polymerase family. Bacterial CCA-adding enzyme type 1 subfamily. Monomer. Can also form homodimers and oligomers. Mg(2+) serves as cofactor. The cofactor is Ni(2+).

It catalyses the reaction a tRNA precursor + 2 CTP + ATP = a tRNA with a 3' CCA end + 3 diphosphate. The enzyme catalyses a tRNA with a 3' CCA end + 2 CTP + ATP = a tRNA with a 3' CCACCA end + 3 diphosphate. In terms of biological role, catalyzes the addition and repair of the essential 3'-terminal CCA sequence in tRNAs without using a nucleic acid template. Adds these three nucleotides in the order of C, C, and A to the tRNA nucleotide-73, using CTP and ATP as substrates and producing inorganic pyrophosphate. tRNA 3'-terminal CCA addition is required both for tRNA processing and repair. Also involved in tRNA surveillance by mediating tandem CCA addition to generate a CCACCA at the 3' terminus of unstable tRNAs. While stable tRNAs receive only 3'-terminal CCA, unstable tRNAs are marked with CCACCA and rapidly degraded. This chain is Multifunctional CCA protein, found in Shewanella piezotolerans (strain WP3 / JCM 13877).